A 318-amino-acid polypeptide reads, in one-letter code: Acetyl-coenzyme A carboxylase carboxyl transferase subunit beta (318 aa).

The 270-residue stretch at 25-294 (LWSKCSECGT…AVKGELPAPA (270 aa)) folds into the CoA carboxyltransferase N-terminal domain. 4 residues coordinate Zn(2+): C29, C32, C48, and C51. The C4-type zinc-finger motif lies at 29–51 (CSECGTMLFHRELSDNLNVCTNC). Residues 286-318 (VKGELPAPAPLESDAETALASDTDPNGAPPSKD) form a disordered region.

It belongs to the AccD/PCCB family. As to quaternary structure, acetyl-CoA carboxylase is a heterohexamer composed of biotin carboxyl carrier protein (AccB), biotin carboxylase (AccC) and two subunits each of ACCase subunit alpha (AccA) and ACCase subunit beta (AccD). Zn(2+) is required as a cofactor.

It is found in the cytoplasm. The enzyme catalyses N(6)-carboxybiotinyl-L-lysyl-[protein] + acetyl-CoA = N(6)-biotinyl-L-lysyl-[protein] + malonyl-CoA. It participates in lipid metabolism; malonyl-CoA biosynthesis; malonyl-CoA from acetyl-CoA: step 1/1. Its function is as follows. Component of the acetyl coenzyme A carboxylase (ACC) complex. Biotin carboxylase (BC) catalyzes the carboxylation of biotin on its carrier protein (BCCP) and then the CO(2) group is transferred by the transcarboxylase to acetyl-CoA to form malonyl-CoA. In Jannaschia sp. (strain CCS1), this protein is Acetyl-coenzyme A carboxylase carboxyl transferase subunit beta.